Consider the following 786-residue polypeptide: Endonuclease MutS2 (786 aa).

Residue 332–339 (GPNTGGKT) participates in ATP binding. In terms of domain architecture, Smr spans 711-786 (IDLRGMDSEE…GTGVTVVILK (76 aa)).

It belongs to the DNA mismatch repair MutS family. MutS2 subfamily. In terms of assembly, homodimer. Binds to stalled ribosomes, contacting rRNA.

In terms of biological role, endonuclease that is involved in the suppression of homologous recombination and thus may have a key role in the control of bacterial genetic diversity. Acts as a ribosome collision sensor, splitting the ribosome into its 2 subunits. Detects stalled/collided 70S ribosomes which it binds and splits by an ATP-hydrolysis driven conformational change. Acts upstream of the ribosome quality control system (RQC), a ribosome-associated complex that mediates the extraction of incompletely synthesized nascent chains from stalled ribosomes and their subsequent degradation. Probably generates substrates for RQC. This is Endonuclease MutS2 from Clostridium perfringens (strain 13 / Type A).